Reading from the N-terminus, the 264-residue chain is Caffeoyl-CoA O-methyltransferase 2 (264 aa).

Over residues 1 to 20 (MATTATEATKTTAPAQEQQA) the composition is skewed to low complexity. The interval 1-37 (MATTATEATKTTAPAQEQQANGNGNGEQKTRHSEVGH) is disordered. Residues 28 to 37 (QKTRHSEVGH) show a composition bias toward basic and acidic residues. Residue K38 coordinates substrate. S-adenosyl-L-methionine contacts are provided by residues T80, E102, 104-105 (GV), S110, D128, and A157. D180 lines the substrate pocket. Residue D180 coordinates a divalent metal cation. D182 lines the S-adenosyl-L-methionine pocket. D206 and N207 together coordinate a divalent metal cation. N211 contacts substrate.

This sequence belongs to the class I-like SAM-binding methyltransferase superfamily. Cation-dependent O-methyltransferase family. CCoAMT subfamily. Requires a divalent metal cation as cofactor.

It catalyses the reaction (E)-caffeoyl-CoA + S-adenosyl-L-methionine = (E)-feruloyl-CoA + S-adenosyl-L-homocysteine + H(+). It participates in aromatic compound metabolism; phenylpropanoid biosynthesis. Functionally, methylates caffeoyl-CoA to feruloyl-CoA and 5-hydroxyferuloyl-CoA to sinapoyl-CoA. Plays a role in the synthesis of feruloylated polysaccharides. Involved in the reinforcement of the plant cell wall. Also involved in the responding to wounding or pathogen challenge by the increased formation of cell wall-bound ferulic acid polymers. The chain is Caffeoyl-CoA O-methyltransferase 2 (CCOAOMT2) from Zea mays (Maize).